A 241-amino-acid chain; its full sequence is Sugar fermentation stimulation protein homolog (241 aa).

Belongs to the SfsA family.

This Thermosynechococcus vestitus (strain NIES-2133 / IAM M-273 / BP-1) protein is Sugar fermentation stimulation protein homolog.